A 108-amino-acid chain; its full sequence is MALWILLPLLALLILWGPDPAQAFVNQHLCGSHLVEALYILVCGERGFFYTPMSRREVEDPQVGQVELGAGPGAGSEQTLALEVARQARIVQQCTSGICSLYQENYCN.

Residues 1–23 (MALWILLPLLALLILWGPDPAQA) form the signal peptide. Cystine bridges form between C30-C94 and C43-C107. The propeptide at 57–88 (EVEDPQVGQVELGAGPGAGSEQTLALEVARQA) is c peptide.

It belongs to the insulin family. As to quaternary structure, heterodimer of a B chain and an A chain linked by two disulfide bonds.

The protein resides in the secreted. Its function is as follows. Insulin decreases blood glucose concentration. It increases cell permeability to monosaccharides, amino acids and fatty acids. It accelerates glycolysis, the pentose phosphate cycle, and glycogen synthesis in liver. This is Insulin (INS) from Rodentia sp.